The chain runs to 341 residues: Protein MENT (341 aa).

Residues 1-23 form the signal peptide; that stretch reads MVPAAGALLWVLLLNLGPRAAGA. Residues 115–196 are disordered; the sequence is AGKDSTSREL…SPSPTAMPSP (82 aa). The segment covering 127–155 has biased composition (polar residues); sequence ATPNTAGSSSTRFIANSQEPEIRLTSSLP.

In terms of processing, phosphorylation sites are present in the extracellular medium. As to expression, plasma. Overexpressed in lymphomas.

It localises to the secreted. Its function is as follows. Involved in control of cellular proliferation. Onconcogenic modifier contributing to the tumor suppressor function of DNMT3B. This is Protein MENT (MENT) from Homo sapiens (Human).